Consider the following 397-residue polypeptide: Aspartate/prephenate aminotransferase (397 aa).

L-aspartate is bound by residues glycine 38, tryptophan 124, and asparagine 174. Lysine 238 is modified (N6-(pyridoxal phosphate)lysine). Arginine 375 serves as a coordination point for L-aspartate.

This sequence belongs to the class-I pyridoxal-phosphate-dependent aminotransferase family. Homodimer. Requires pyridoxal 5'-phosphate as cofactor.

It is found in the cytoplasm. It carries out the reaction L-aspartate + 2-oxoglutarate = oxaloacetate + L-glutamate. The enzyme catalyses L-arogenate + 2-oxoglutarate = prephenate + L-glutamate. Catalyzes the reversible conversion of aspartate and 2-oxoglutarate to glutamate and oxaloacetate. Can also transaminate prephenate in the presence of glutamate, with lower efficiency. This Nitrosomonas europaea (strain ATCC 19718 / CIP 103999 / KCTC 2705 / NBRC 14298) protein is Aspartate/prephenate aminotransferase.